The sequence spans 585 residues: tRNA 5-methylaminomethyl-2-thiouridine biosynthesis bifunctional protein MnmC (585 aa).

The segment at 1-236 (MTPDGLYCDP…KRERLEAVWP (236 aa)) is tRNA (mnm(5)s(2)U34)-methyltransferase. The FAD-dependent cmnm(5)s(2)U34 oxidoreductase stretch occupies residues 254–585 (LGAGIAGASL…SRRAGQGAAG (332 aa)). Positions 564 to 585 (EAMAPGRFAERRSRRAGQGAAG) are disordered.

It in the N-terminal section; belongs to the methyltransferase superfamily. tRNA (mnm(5)s(2)U34)-methyltransferase family. This sequence in the C-terminal section; belongs to the DAO family. Requires FAD as cofactor.

Its subcellular location is the cytoplasm. It carries out the reaction 5-aminomethyl-2-thiouridine(34) in tRNA + S-adenosyl-L-methionine = 5-methylaminomethyl-2-thiouridine(34) in tRNA + S-adenosyl-L-homocysteine + H(+). Its function is as follows. Catalyzes the last two steps in the biosynthesis of 5-methylaminomethyl-2-thiouridine (mnm(5)s(2)U) at the wobble position (U34) in tRNA. Catalyzes the FAD-dependent demodification of cmnm(5)s(2)U34 to nm(5)s(2)U34, followed by the transfer of a methyl group from S-adenosyl-L-methionine to nm(5)s(2)U34, to form mnm(5)s(2)U34. This is tRNA 5-methylaminomethyl-2-thiouridine biosynthesis bifunctional protein MnmC from Maricaulis maris (strain MCS10) (Caulobacter maris).